Consider the following 109-residue polypeptide: METRATLRGVRLSVDKGRLVADLIRGKKVDQALNILNFTQKKAAGIIKKVVESAIANAEHNDGADIDELKVKTIYVEQGATLKRFSARAKGRGNSISKPTCHVYVVVGN.

It belongs to the universal ribosomal protein uL22 family. Part of the 50S ribosomal subunit.

In terms of biological role, this protein binds specifically to 23S rRNA; its binding is stimulated by other ribosomal proteins, e.g. L4, L17, and L20. It is important during the early stages of 50S assembly. It makes multiple contacts with different domains of the 23S rRNA in the assembled 50S subunit and ribosome. Functionally, the globular domain of the protein is located near the polypeptide exit tunnel on the outside of the subunit, while an extended beta-hairpin is found that lines the wall of the exit tunnel in the center of the 70S ribosome. The polypeptide is Large ribosomal subunit protein uL22 (Polaromonas sp. (strain JS666 / ATCC BAA-500)).